Here is a 470-residue protein sequence, read N- to C-terminus: Cupincin (470 aa).

A signal peptide spans 1–34; sequence MAKKKTSSSMARSQLAALLISLCFLSLASNAVGW. Positions 36-52 are enriched in basic and acidic residues; sequence RRGEREEEDERRRHGGE. Disordered stretches follow at residues 36–57 and 240–261; these read RRGEREEEDERRRHGGEGGRPY and KSCSRGGGGGSGSEWEIKPSSL. 2 Cupin type-1 domains span residues 57-215 and 259-445; these read YHFG…EELE and SSLT…AREA. The N-linked (GlcNAc...) asparagine glycan is linked to asparagine 297. A disordered region spans residues 330-368; that stretch reads PHVSGGGSSERREREREHGRRREEEQGEEEHGERGEKAR. Basic and acidic residues predominate over residues 338–367; the sequence is SERREREREHGRRREEEQGEEEHGERGEKA. Zn(2+) is bound by residues histidine 347, glutamate 352, and histidine 360.

It belongs to the 7S seed storage protein family. In terms of assembly, homotrimer. Zn(2+) is required as a cofactor.

The protein resides in the secreted. Its function is as follows. Seed storage protein. Globulin-like protein that acts as a zinc metalloprotease. Cleaves specifically between Leu-15 and Tyr-16 of insulin B chain, and Gln-1 and Leu-2 of neurotensin (NT) peptide in vitro. May play a role as an initiating endopeptidase in germinating seeds. This chain is Cupincin, found in Oryza sativa subsp. indica (Rice).